The primary structure comprises 545 residues: Glucose-6-phosphate isomerase (545 aa).

The Proton donor role is filled by Glu-351. Residues His-382 and Lys-510 contribute to the active site.

This sequence belongs to the GPI family.

It is found in the cytoplasm. It carries out the reaction alpha-D-glucose 6-phosphate = beta-D-fructose 6-phosphate. Its pathway is carbohydrate biosynthesis; gluconeogenesis. It participates in carbohydrate degradation; glycolysis; D-glyceraldehyde 3-phosphate and glycerone phosphate from D-glucose: step 2/4. Functionally, catalyzes the reversible isomerization of glucose-6-phosphate to fructose-6-phosphate. In Shewanella denitrificans (strain OS217 / ATCC BAA-1090 / DSM 15013), this protein is Glucose-6-phosphate isomerase.